The primary structure comprises 151 residues: Ubiquitin-like protein 4A-B (151 aa).

Positions 1–76 (MILTIKPLKG…LNLVVRPAGE (76 aa)) constitute a Ubiquitin-like domain.

Component of the BAT3 complex.

The protein resides in the cytoplasm. The protein localises to the cytosol. In terms of biological role, component of the BAT3 complex, a multiprotein complex involved in the post-translational delivery of tail-anchored (TA) membrane proteins to the endoplasmic reticulum membrane. TA membrane proteins, also named type II transmembrane proteins, contain a single C-terminal transmembrane region. The sequence is that of Ubiquitin-like protein 4A-B (ubl4ab) from Oncorhynchus mykiss (Rainbow trout).